Here is a 554-residue protein sequence, read N- to C-terminus: CTP synthase (554 aa).

The segment at 1-270 (MTKFVFVTGG…DGLICDKLRL (270 aa)) is amidoligase domain. Position 13 (S13) interacts with CTP. S13 provides a ligand contact to UTP. ATP is bound by residues 14–19 (SLGKGI) and D71. Residues D71 and E144 each contribute to the Mg(2+) site. Residues 151–153 (DIE), 191–196 (KTKPTQ), and K227 contribute to the CTP site. UTP contacts are provided by residues 191 to 196 (KTKPTQ) and K227. The Glutamine amidotransferase type-1 domain maps to 295–548 (TVAMVGKYVD…IAAAKARHQA (254 aa)). G357 serves as a coordination point for L-glutamine. C384 functions as the Nucleophile; for glutamine hydrolysis in the catalytic mechanism. Residues 385-388 (LGMQ), E408, and R474 each bind L-glutamine. Residues H521 and E523 contribute to the active site.

This sequence belongs to the CTP synthase family. As to quaternary structure, homotetramer.

It carries out the reaction UTP + L-glutamine + ATP + H2O = CTP + L-glutamate + ADP + phosphate + 2 H(+). The catalysed reaction is L-glutamine + H2O = L-glutamate + NH4(+). It catalyses the reaction UTP + NH4(+) + ATP = CTP + ADP + phosphate + 2 H(+). It participates in pyrimidine metabolism; CTP biosynthesis via de novo pathway; CTP from UDP: step 2/2. With respect to regulation, allosterically activated by GTP, when glutamine is the substrate; GTP has no effect on the reaction when ammonia is the substrate. The allosteric effector GTP functions by stabilizing the protein conformation that binds the tetrahedral intermediate(s) formed during glutamine hydrolysis. Inhibited by the product CTP, via allosteric rather than competitive inhibition. In terms of biological role, catalyzes the ATP-dependent amination of UTP to CTP with either L-glutamine or ammonia as the source of nitrogen. Regulates intracellular CTP levels through interactions with the four ribonucleotide triphosphates. This Verminephrobacter eiseniae (strain EF01-2) protein is CTP synthase.